Here is a 38-residue protein sequence, read N- to C-terminus: Large ribosomal subunit protein bL36 (38 aa).

The protein belongs to the bacterial ribosomal protein bL36 family.

The sequence is that of Large ribosomal subunit protein bL36 from Synechococcus sp. (strain JA-2-3B'a(2-13)) (Cyanobacteria bacterium Yellowstone B-Prime).